The chain runs to 406 residues: Cysteine desulfurase (406 aa).

The residue at position 226 (Lys-226) is an N6-(pyridoxal phosphate)lysine. Residue Cys-364 is the Cysteine persulfide intermediate of the active site.

Belongs to the class-V pyridoxal-phosphate-dependent aminotransferase family. Csd subfamily. In terms of assembly, homodimer. Interacts with SufE and the SufBCD complex composed of SufB, SufC and SufD. The interaction with SufE is required to mediate the direct transfer of the sulfur atom from the S-sulfanylcysteine. Pyridoxal 5'-phosphate is required as a cofactor.

The protein localises to the cytoplasm. The enzyme catalyses (sulfur carrier)-H + L-cysteine = (sulfur carrier)-SH + L-alanine. It catalyses the reaction L-selenocysteine + AH2 = hydrogenselenide + L-alanine + A + H(+). The protein operates within cofactor biosynthesis; iron-sulfur cluster biosynthesis. Cysteine desulfurases mobilize the sulfur from L-cysteine to yield L-alanine, an essential step in sulfur metabolism for biosynthesis of a variety of sulfur-containing biomolecules. Component of the suf operon, which is activated and required under specific conditions such as oxidative stress and iron limitation. Acts as a potent selenocysteine lyase in vitro, that mobilizes selenium from L-selenocysteine. Selenocysteine lyase activity is however unsure in vivo. This Escherichia fergusonii (strain ATCC 35469 / DSM 13698 / CCUG 18766 / IAM 14443 / JCM 21226 / LMG 7866 / NBRC 102419 / NCTC 12128 / CDC 0568-73) protein is Cysteine desulfurase.